The primary structure comprises 77 residues: Protein AC43 (77 aa).

Plays a role in the production of occlusion bodies as well as expression of the polyhedrin gene. This chain is Protein AC43, found in Autographa californica nuclear polyhedrosis virus (AcMNPV).